Consider the following 157-residue polypeptide: Small ribosomal subunit protein uS7 (157 aa).

Belongs to the universal ribosomal protein uS7 family. As to quaternary structure, part of the 30S ribosomal subunit. Contacts proteins S9 and S11.

In terms of biological role, one of the primary rRNA binding proteins, it binds directly to 16S rRNA where it nucleates assembly of the head domain of the 30S subunit. Is located at the subunit interface close to the decoding center, probably blocks exit of the E-site tRNA. The polypeptide is Small ribosomal subunit protein uS7 (Caldicellulosiruptor bescii (strain ATCC BAA-1888 / DSM 6725 / KCTC 15123 / Z-1320) (Anaerocellum thermophilum)).